Reading from the N-terminus, the 158-residue chain is Chromobox protein homolog 7 (158 aa).

The region spanning 11–69 (FAVESIRKKRVRKGKVEYLVKWKGWPPKYSTWEPEEHILDPRLVMAYEEKEERDRASGY) is the Chromo domain. Residues 60–127 (KEERDRASGY…WTPTLPSSEV (68 aa)) are disordered. Over residues 68-78 (GYRKRGPKPRR) the composition is skewed to basic residues.

Component of a PRC1-like complex. Distinct PRC1-like core complexes are composed of a RING1 subunit (RING1B or RING1A), one of the six PCGF proteins (PCGF1-6), one PHC protein (PHC1-3) and one of the CBX proteins (CBX2, CBX4, CBX6, CBX7 or CBX8). The composition of the PRC1 complex may differ between the PRC1 complex in pluripotent embryonic stem cells containing RNF2, CBX7 and PCGF2, and the PRC1 complex in differentiating cells containing RNF2, CBX2, CBX4 and BMI1. Interacts with RING1. Interacts with RNF2, PHC1 and PCGF2. Interacts (via chromodomain) with histone H3K9Me3 and H3K27me3. Interacts with H3K9Me2 and H4K20Me1. Interacts (via chromodomain) with single-stranded and double-stranded RNA; RNA binding seems to be required for the localization to chromatin. Interacts with PCGF1, PCGF3, PCGF5 and PCGF6. Expressed in embryonic stem cells.

It is found in the nucleus. Its subcellular location is the chromosome. Component of a Polycomb group (PcG) multiprotein PRC1-like complex, a complex class required to maintain the transcriptionally repressive state of many genes, including Hox genes, throughout development. PcG PRC1 complex acts via chromatin remodeling and modification of histones; it mediates monoubiquitination of histone H2A 'Lys-119', rendering chromatin heritably changed in its expressibility. Promotes histone H3 trimethylation at 'Lys-9' (H3K9me3). Binds to histone H3 trimethylated at 'Lys-9' (H3K9me3) or at 'Lys-27' (H3K27me3). Trimethylation at 'Lys-27' (H3K27me3) is important for chromatin recruitment. May possibly also bind trimethylated lysine residues in other proteins (in vitro). Binds non-coding, single-stranded RNA and double-stranded RNA. Plays a role in the timely repression of differentiation-specific genes in pluripotent embryonic stem cells to maintain the undifferentiated state. Regulator of cellular lifespan by maintaining the repression of CDKN2A, but not by inducing telomerase activity. The sequence is that of Chromobox protein homolog 7 (Cbx7) from Mus musculus (Mouse).